The following is a 281-amino-acid chain: MKLYRSLKAALLPGICTSILLASCASTNTYQDQRNALISLASNRDTLIANAKKSKEEVQKEVTKMNSSTSSMMTATQSVAITTHQTTEKTNNSKYDLDKLFKDYILYVVDNFSGLVFKRTGGHRIQLIDKDKEILDGGNLTKHTHHDHNHMHNHEHEHEEHHDEEETEVVGRALSFTNGIFLVIDYKKDSERKNMSGSTTMMHQHHHEAEEHKEERKLSLNLKAYKFNTPFNISEFISAWHHKESHNSDTEFNNLHNKYDKEELDIIDYNFEEKAVDETIA.

A signal peptide spans Met1–Ser23. Cys24 is lipidated: N-palmitoyl cysteine. Cys24 carries the S-diacylglycerol cysteine lipid modification. Positions His145–Glu165 are disordered. Residues His150 to His161 are compositionally biased toward basic and acidic residues.

It localises to the cell membrane. This is an uncharacterized protein from Mycoplasma genitalium (strain ATCC 33530 / DSM 19775 / NCTC 10195 / G37) (Mycoplasmoides genitalium).